Consider the following 426-residue polypeptide: C4-dicarboxylate transport protein (426 aa).

The next 8 helical transmembrane spans lie at 4 to 24 (SIFT…ILLG), 44 to 64 (LIKM…IAGM), 76 to 96 (IALL…LVVV), 142 to 162 (IGAF…MFGF), 184 to 204 (VIFG…FGAM), 222 to 242 (LILC…GSIA), 326 to 346 (IWHQ…AAGV), and 352 to 372 (IVLA…LALI).

This sequence belongs to the dicarboxylate/amino acid:cation symporter (DAACS) (TC 2.A.23) family.

It is found in the cell inner membrane. Responsible for the transport of dicarboxylates such as succinate, fumarate, and malate from the periplasm across the membrane. The chain is C4-dicarboxylate transport protein from Edwardsiella ictaluri (strain 93-146).